Here is a 421-residue protein sequence, read N- to C-terminus: 4-hydroxy-3-methylbut-2-en-1-yl diphosphate synthase (flavodoxin) (421 aa).

Positions 298, 301, 344, and 351 each coordinate [4Fe-4S] cluster.

It belongs to the IspG family. [4Fe-4S] cluster is required as a cofactor.

It catalyses the reaction (2E)-4-hydroxy-3-methylbut-2-enyl diphosphate + oxidized [flavodoxin] + H2O + 2 H(+) = 2-C-methyl-D-erythritol 2,4-cyclic diphosphate + reduced [flavodoxin]. The protein operates within isoprenoid biosynthesis; isopentenyl diphosphate biosynthesis via DXP pathway; isopentenyl diphosphate from 1-deoxy-D-xylulose 5-phosphate: step 5/6. Functionally, converts 2C-methyl-D-erythritol 2,4-cyclodiphosphate (ME-2,4cPP) into 1-hydroxy-2-methyl-2-(E)-butenyl 4-diphosphate. This Neisseria meningitidis serogroup B (strain ATCC BAA-335 / MC58) protein is 4-hydroxy-3-methylbut-2-en-1-yl diphosphate synthase (flavodoxin).